Consider the following 910-residue polypeptide: DNA mismatch repair protein MutS (910 aa).

Over residues 1 to 11 the composition is skewed to basic and acidic residues; that stretch reads MEAKVEEKEPE. Residues 1–21 are disordered; it reads MEAKVEEKEPEPVENAGPDAP. Residue 658 to 665 coordinates ATP; it reads GPNMGGKS.

Belongs to the DNA mismatch repair MutS family.

Functionally, this protein is involved in the repair of mismatches in DNA. It is possible that it carries out the mismatch recognition step. This protein has a weak ATPase activity. The protein is DNA mismatch repair protein MutS of Brucella abortus (strain 2308).